The chain runs to 92 residues: uncharacterized protein (92 aa).

This is an uncharacterized protein from Dictyostelium discoideum (Social amoeba).